We begin with the raw amino-acid sequence, 389 residues long: Leucine aminopeptidase 1 (389 aa).

A signal peptide spans 1 to 18 (MKSAALLLPLYAAAFAAA). The propeptide occupies 19–89 (AFHHEHAQAV…TLKRRINAAS (71 aa)). The N-linked (GlcNAc...) asparagine glycan is linked to N99. Zn(2+) contacts are provided by H188, D207, E246, and D273. A disulfide bridge connects residues C322 and C326. Residue H355 participates in Zn(2+) binding.

This sequence belongs to the peptidase M28 family. M28E subfamily. In terms of assembly, monomer. It depends on Zn(2+) as a cofactor.

The protein resides in the secreted. Its function is as follows. Extracellular aminopeptidase that allows assimilation of proteinaceous substrates. This chain is Leucine aminopeptidase 1 (lap1), found in Pyrenophora teres f. teres (strain 0-1) (Barley net blotch fungus).